Reading from the N-terminus, the 414-residue chain is uncharacterized protein (414 aa).

The signal sequence occupies residues 1 to 20 (MKKLLAIGILCIMVTAVMSG). A lipid anchor (S-archaeol cysteine) is attached at Cys21. The Fe/B12 periplasmic-binding domain occupies 119–389 (RVIVMSSTEI…DLATILHPEA (271 aa)).

The protein resides in the cell membrane. This is an uncharacterized protein from Methanocaldococcus jannaschii (strain ATCC 43067 / DSM 2661 / JAL-1 / JCM 10045 / NBRC 100440) (Methanococcus jannaschii).